A 276-amino-acid chain; its full sequence is Octanoyltransferase LipM (276 aa).

Residues G33–F247 form the BPL/LPL catalytic domain. The Acyl-thioester intermediate role is filled by C150.

This sequence belongs to the octanoyltransferase LipM family. In terms of assembly, monomer.

It catalyses the reaction octanoyl-[ACP] + L-lysyl-[protein] = N(6)-octanoyl-L-lysyl-[protein] + holo-[ACP] + H(+). It functions in the pathway protein modification; protein lipoylation via endogenous pathway; protein N(6)-(lipoyl)lysine from octanoyl-[acyl-carrier-protein]. In terms of biological role, catalyzes the transfer of endogenously produced octanoic acid from octanoyl-acyl-carrier-protein onto the lipoyl domain of GcvH, an intermediate carrier during protein lipoylation. The chain is Octanoyltransferase LipM from Exiguobacterium sp. (strain ATCC BAA-1283 / AT1b).